A 165-amino-acid chain; its full sequence is Small ribosomal subunit protein uS17c (165 aa).

A chloroplast-targeting transit peptide spans methionine 1 to alanine 57. The disordered stretch occupies residues alanine 128–valine 165.

Component of the chloroplast small ribosomal subunit (SSU). Mature 70S chloroplast ribosomes of higher plants consist of a small (30S) and a large (50S) subunit. The 30S small subunit contains 1 molecule of ribosomal RNA (16S rRNA) and 24 different proteins. The 50S large subunit contains 3 rRNA molecules (23S, 5S and 4.5S rRNA) and 33 different proteins.

It is found in the plastid. Its subcellular location is the chloroplast. Functionally, component of the chloroplast ribosome (chloro-ribosome), a dedicated translation machinery responsible for the synthesis of chloroplast genome-encoded proteins, including proteins of the transcription and translation machinery and components of the photosynthetic apparatus. This Spinacia oleracea (Spinach) protein is Small ribosomal subunit protein uS17c (RPS17).